The following is a 711-amino-acid chain: Nuclear intron maturase 1, mitochondrial (711 aa).

Positions 147 to 459 (KDKISMNGGE…RGIQFLDHII (313 aa)) constitute a Reverse transcriptase domain. Residues 484–653 (GTLLSVSASL…QVLQEYIRLQ (170 aa)) are intron maturase type-2.

Belongs to the plant nuclear intron maturase (nMat) family. In terms of tissue distribution, expressed at low levels in seedlings and accumulates in adult plants.

It is found in the mitochondrion. Nuclear-encoded maturase required for splicing of group-II introns in mitochondria. Necessary for mitochondrial biogenesis during early developmental stages. Involved in the splicing of mitochondrial NAD4 transcripts. Required for trans-splicing of NAD1 intron 1 and also functions in cis-splicing of NAD2 intron 1 and NAD4 intron 2. Required for the regulation of fundamental metabolic pathways such as amino acid metabolism, triacylglycerol degradation and polysaccharide synthesis (cellulose and starch) during the early stage of plant growth. Implicated in stress responses. The sequence is that of Nuclear intron maturase 1, mitochondrial from Arabidopsis thaliana (Mouse-ear cress).